The sequence spans 284 residues: Bifunctional protein FolD (284 aa).

NADP(+) contacts are provided by residues 165 to 167, isoleucine 190, and isoleucine 231; that span reads GAS.

It belongs to the tetrahydrofolate dehydrogenase/cyclohydrolase family. As to quaternary structure, homodimer.

It catalyses the reaction (6R)-5,10-methylene-5,6,7,8-tetrahydrofolate + NADP(+) = (6R)-5,10-methenyltetrahydrofolate + NADPH. The enzyme catalyses (6R)-5,10-methenyltetrahydrofolate + H2O = (6R)-10-formyltetrahydrofolate + H(+). It functions in the pathway one-carbon metabolism; tetrahydrofolate interconversion. Catalyzes the oxidation of 5,10-methylenetetrahydrofolate to 5,10-methenyltetrahydrofolate and then the hydrolysis of 5,10-methenyltetrahydrofolate to 10-formyltetrahydrofolate. The protein is Bifunctional protein FolD of Alkaliphilus metalliredigens (strain QYMF).